The following is a 274-amino-acid chain: GATA transcription factor 1 (274 aa).

Disordered stretches follow at residues 1–39 and 102–132; these read MEME…KTGL and SPVS…TAVA. The Nuclear localization signal motif lies at 152-159; the sequence is KARSKRRR. Residues 190–244 form a GATA-type zinc finger; it reads LIMGRKCQHCGAEKTPQWRAGPAGPKTLCNACGVRYKSGRLVPEYRPANSPTFTA.

This sequence belongs to the type IV zinc-finger family. Class A subfamily. As to expression, mostly expressed in roots. Also expressed in stems, flowers and leaves.

Its subcellular location is the nucleus. In terms of biological role, transcriptional activator that specifically binds 5'-GATA-3' or 5'-GAT-3' motifs within gene promoters. May be involved in the regulation of some light-responsive genes. The polypeptide is GATA transcription factor 1 (GATA1) (Arabidopsis thaliana (Mouse-ear cress)).